The chain runs to 549 residues: Hydroxylamine reductase (549 aa).

Cysteine 3, cysteine 6, cysteine 15, and cysteine 21 together coordinate [4Fe-4S] cluster. Residues histidine 248, glutamate 272, cysteine 316, cysteine 403, cysteine 431, cysteine 456, glutamate 490, and lysine 492 each coordinate hybrid [4Fe-2O-2S] cluster. Cysteine 403 carries the cysteine persulfide modification.

It belongs to the HCP family. [4Fe-4S] cluster is required as a cofactor. Requires hybrid [4Fe-2O-2S] cluster as cofactor.

Its subcellular location is the cytoplasm. It catalyses the reaction A + NH4(+) + H2O = hydroxylamine + AH2 + H(+). In terms of biological role, catalyzes the reduction of hydroxylamine to form NH(3) and H(2)O. The polypeptide is Hydroxylamine reductase (Rhodospirillum rubrum (strain ATCC 11170 / ATH 1.1.1 / DSM 467 / LMG 4362 / NCIMB 8255 / S1)).